The following is a 441-amino-acid chain: Ribosomal protein uS12 methylthiotransferase RimO (441 aa).

The region spanning 7–117 (PKISFVSLGC…VLDAVHRAKP (111 aa)) is the MTTase N-terminal domain. Cys16, Cys52, Cys81, Cys148, Cys152, and Cys155 together coordinate [4Fe-4S] cluster. Positions 134–371 (LTPRHYAYLK…MARQQAISAR (238 aa)) constitute a Radical SAM core domain. The 67-residue stretch at 374–440 (KRKVGTRQQI…AYDLHGTVAG (67 aa)) folds into the TRAM domain.

Belongs to the methylthiotransferase family. RimO subfamily. The cofactor is [4Fe-4S] cluster.

Its subcellular location is the cytoplasm. The catalysed reaction is L-aspartate(89)-[ribosomal protein uS12]-hydrogen + (sulfur carrier)-SH + AH2 + 2 S-adenosyl-L-methionine = 3-methylsulfanyl-L-aspartate(89)-[ribosomal protein uS12]-hydrogen + (sulfur carrier)-H + 5'-deoxyadenosine + L-methionine + A + S-adenosyl-L-homocysteine + 2 H(+). In terms of biological role, catalyzes the methylthiolation of an aspartic acid residue of ribosomal protein uS12. The polypeptide is Ribosomal protein uS12 methylthiotransferase RimO (Rhodopseudomonas palustris (strain HaA2)).